A 282-amino-acid polypeptide reads, in one-letter code: Undecaprenyl-diphosphatase (282 aa).

7 helical membrane-spanning segments follow: residues 40–60, 85–105, 117–137, 158–178, 193–213, 231–251, and 258–278; these read GAAF…IYFF, AKMG…GLLF, YWIS…EWLI, ALII…RSGV, AARF…IYQL, IVAT…LITF, and AVFI…IATG.

This sequence belongs to the UppP family.

It localises to the cell inner membrane. The enzyme catalyses di-trans,octa-cis-undecaprenyl diphosphate + H2O = di-trans,octa-cis-undecaprenyl phosphate + phosphate + H(+). Functionally, catalyzes the dephosphorylation of undecaprenyl diphosphate (UPP). Confers resistance to bacitracin. The protein is Undecaprenyl-diphosphatase of Prosthecochloris aestuarii (strain DSM 271 / SK 413).